The following is a 394-amino-acid chain: Elongation factor Tu (394 aa).

A tr-type G domain is found at 10-204 (KPHVNVGTIG…ALDSYIPEPE (195 aa)). A G1 region spans residues 19–26 (GHVDHGKT). A GTP-binding site is contributed by 19–26 (GHVDHGKT). Thr26 is a Mg(2+) binding site. Residues 60-64 (GITIA) are G2. The interval 81–84 (DCPG) is G3. GTP-binding positions include 81–85 (DCPGH) and 136–139 (NKCD). The interval 136-139 (NKCD) is G4. Positions 174 to 176 (SAL) are G5.

It belongs to the TRAFAC class translation factor GTPase superfamily. Classic translation factor GTPase family. EF-Tu/EF-1A subfamily. Monomer.

Its subcellular location is the cytoplasm. The enzyme catalyses GTP + H2O = GDP + phosphate + H(+). Its function is as follows. GTP hydrolase that promotes the GTP-dependent binding of aminoacyl-tRNA to the A-site of ribosomes during protein biosynthesis. The chain is Elongation factor Tu from Vibrio campbellii (strain ATCC BAA-1116).